The following is a 1008-amino-acid chain: Envelopment polyprotein (1008 aa).

A signal peptide spans 1–17 (MVRTYLLLLLLCGPATP). At 18-394 (FFNHLMDVTR…NWANIHCFSK (377 aa)) the chain is on the lumenal side. Asparagine 34, asparagine 70, and asparagine 108 each carry an N-linked (GlcNAc...) asparagine; by host glycan. Intrachain disulfides connect cysteine 138/cysteine 269, cysteine 156/cysteine 166, cysteine 206/cysteine 247, cysteine 216/cysteine 226, cysteine 233/cysteine 238, cysteine 292/cysteine 295, cysteine 299/cysteine 368, and cysteine 319/cysteine 324. Asparagine 208 is a glycosylation site (N-linked (GlcNAc...) asparagine; by host). The chain crosses the membrane as a helical span at residues 395–415 (EQVLILVAVSSLCILLLASVL). The Cytoplasmic portion of the chain corresponds to 416–496 (RALKVIATFT…VRQKMFNLTR (81 aa)). A golgi retention signal region spans residues 419–465 (KVIATFTWKIIKPFWWILSLLCRTCSKRLNKRAERLKESIHSLEEGL). An important for correct targeting of the glycoproteins to the Golgi complex but not for heterodimerization region spans residues 461-465 (LEEGL). An internal signal sequence for glycoprotein C region spans residues 497–513 (LSPVVVGMLCLACPVES). 12 cysteine pairs are disulfide-bonded: cysteine 514–cysteine 555, cysteine 527–cysteine 537, cysteine 580–cysteine 677, cysteine 595–cysteine 789, cysteine 601–cysteine 650, cysteine 607–cysteine 657, cysteine 612–cysteine 639, cysteine 643–cysteine 648, cysteine 728–cysteine 742, cysteine 758–cysteine 771, cysteine 851–cysteine 924, and cysteine 861–cysteine 864. At 514–977 (CSDSISVTAS…GWFKASWLRA (464 aa)) the chain is on the lumenal side. Residues 601–607 (CHLMGAC) form a fusion loop region. The tract at residues 644–655 (GGALCQCFNMRP) is fusion loop. N-linked (GlcNAc...) asparagine; by host glycans are attached at residues asparagine 691 and asparagine 696. N-linked (GlcNAc...) asparagine; by host glycans are attached at residues asparagine 912 and asparagine 949. Residues 978 to 998 (IWAILGGTVSLIIGVVIIYMV) form a helical membrane-spanning segment. The Cytoplasmic portion of the chain corresponds to 999–1008 (FTLCLKVKKS).

Belongs to the phlebovirus envelope glycoprotein family. As to quaternary structure, homodimer. Heterodimer with glycoprotein C. Homotrimer (postfusion). Heterodimer with glycoprotein N. Homotrimer (postfusion). Specific enzymatic cleavages in vivo yield mature proteins including glycoprotein C and glycoprotein N. In terms of processing, the cytoplasmic tail is Palmitoylated. Post-translationally, glycosylated. Contains principally poly-N-acetyllactosamine glycans. Glycosylated. Contains principally oligomannose-type glycans that can attach to host CD209/DC-SIGN. In terms of processing, palmitoylated.

Its subcellular location is the virion membrane. The protein localises to the host Golgi apparatus membrane. It localises to the host endoplasmic reticulum membrane. In terms of biological role, structural component of the virion that interacts with glycoprotein C. It shields the hydrophobic fusion loops of the glycoprotein C, preventing premature fusion. The glycoprotein protrusions are arranged on an icosahedral lattice, with T=12 triangulation. They are able to attach the virion to the host cell receptor CD209/DC-SIGN and to promote fusion of membranes with the late endosome after endocytosis of the virion. Plays a role in the packaging of ribonucleoproteins during virus assembly. Functionally, structural component of the virion that interacts with glycoprotein N. Acts as a class II fusion protein that is activated upon acidification and subsequent repositioning of the glycoprotein N. The glycoprotein protrusions are arranged on an icosahedral lattice, with T=12 triangulation. They are able to attach the virion to the host cell receptor CD209/DC-SIGN and to promote fusion of membranes with the late endosome after endocytosis of the virion. In Homo sapiens (Human), this protein is Envelopment polyprotein (GP).